The sequence spans 60 residues: Large ribosomal subunit protein bL32 (60 aa).

This sequence belongs to the bacterial ribosomal protein bL32 family.

This Persephonella marina (strain DSM 14350 / EX-H1) protein is Large ribosomal subunit protein bL32.